Consider the following 280-residue polypeptide: Phosphatidylglycerol--prolipoprotein diacylglyceryl transferase (280 aa).

The next 3 membrane-spanning stretches (helical) occupy residues 19–39 (LSVR…YFVA), 56–76 (IIFY…VIFQ), and 90–110 (IWHG…AGVI). R138 provides a ligand contact to a 1,2-diacyl-sn-glycero-3-phospho-(1'-sn-glycerol). 2 helical membrane passes run 204–224 (LGET…FIEG) and 236–256 (IRVA…LIVY).

Belongs to the Lgt family.

The protein localises to the cell membrane. It catalyses the reaction L-cysteinyl-[prolipoprotein] + a 1,2-diacyl-sn-glycero-3-phospho-(1'-sn-glycerol) = an S-1,2-diacyl-sn-glyceryl-L-cysteinyl-[prolipoprotein] + sn-glycerol 1-phosphate + H(+). The protein operates within protein modification; lipoprotein biosynthesis (diacylglyceryl transfer). Functionally, catalyzes the transfer of the diacylglyceryl group from phosphatidylglycerol to the sulfhydryl group of the N-terminal cysteine of a prolipoprotein, the first step in the formation of mature lipoproteins. This is Phosphatidylglycerol--prolipoprotein diacylglyceryl transferase from Staphylococcus aureus (strain MRSA252).